A 169-amino-acid polypeptide reads, in one-letter code: Cilia- and flagella-associated protein 276 (169 aa).

2 disordered regions span residues 26 to 45 and 150 to 169; these read SKKLPYKNPTHLAQQQEPWS and HTAATNGGYSRKKDGGFFST. Residues 36-45 are compositionally biased toward polar residues; the sequence is HLAQQQEPWS. Positions 160 to 169 are enriched in basic and acidic residues; it reads RKKDGGFFST.

As to quaternary structure, microtubule inner protein component of sperm flagellar doublet microtubules. As to expression, expressed in cerebrum, cerebellum, gastrocnemius muscle, spinal cord and lung tissues.

It localises to the cytoplasm. It is found in the cytoskeleton. Its subcellular location is the flagellum axoneme. The protein resides in the cilium axoneme. Functionally, microtubule inner protein (MIP) part of the dynein-decorated doublet microtubules (DMTs) in cilia axoneme, which is required for motile cilia beating. May play an important role for the maintenance of myelin-axon integrity. May affect intracellular Ca(2+) homeostasis. The polypeptide is Cilia- and flagella-associated protein 276 (Homo sapiens (Human)).